A 318-amino-acid polypeptide reads, in one-letter code: Thymidylate synthase (318 aa).

DUMP contacts are provided by residues R25 and R180 to R181. C200 acts as the Nucleophile in catalysis. Residues R220 to D223, N231, and H261 to Y263 each bind dUMP. D223 is a binding site for (6R)-5,10-methylene-5,6,7,8-tetrahydrofolate. (6R)-5,10-methylene-5,6,7,8-tetrahydrofolate is bound at residue A317.

This sequence belongs to the thymidylate synthase family. Bacterial-type ThyA subfamily. As to quaternary structure, homodimer.

It is found in the cytoplasm. It carries out the reaction dUMP + (6R)-5,10-methylene-5,6,7,8-tetrahydrofolate = 7,8-dihydrofolate + dTMP. The protein operates within pyrimidine metabolism; dTTP biosynthesis. Functionally, catalyzes the reductive methylation of 2'-deoxyuridine-5'-monophosphate (dUMP) to 2'-deoxythymidine-5'-monophosphate (dTMP) while utilizing 5,10-methylenetetrahydrofolate (mTHF) as the methyl donor and reductant in the reaction, yielding dihydrofolate (DHF) as a by-product. This enzymatic reaction provides an intracellular de novo source of dTMP, an essential precursor for DNA biosynthesis. The polypeptide is Thymidylate synthase (Bacillus cereus (strain ZK / E33L)).